A 510-amino-acid chain; its full sequence is Maturase K (510 aa).

This sequence belongs to the intron maturase 2 family. MatK subfamily.

The protein resides in the plastid. Functionally, usually encoded in the trnK tRNA gene intron. Probably assists in splicing its own and other chloroplast group II introns. The polypeptide is Maturase K (Aneura mirabilis (Parasitic liverwort)).